A 248-amino-acid polypeptide reads, in one-letter code: Inner membrane protein pE248R (248 aa).

A lipid anchor (N-myristoyl glycine; by host) is attached at glycine 2. Residues glycine 2–asparagine 199 are Cytoplasmic-facing. The helical transmembrane segment at isoleucine 200 to phenylalanine 220 threads the bilayer. Topologically, residues leucine 221–serine 248 are extracellular.

Belongs to the asfivirus E248R family. In terms of assembly, interacts with A151R.

It is found in the host membrane. Its subcellular location is the virion membrane. Its function is as follows. Essential for viral fusion with host endosomal membrane and core release. This chain is Inner membrane protein pE248R, found in Ornithodoros (relapsing fever ticks).